Reading from the N-terminus, the 467-residue chain is Coiled-coil domain-containing protein 174 (467 aa).

2 disordered regions span residues 40 to 77 (VFGK…EEQK) and 124 to 162 (EMEA…SEEW). Positions 63-99 (NRAEKDAEQKIEEQKTLDKAREKLEEKAKLYEKMTKG) form a coiled coil. Composition is skewed to basic and acidic residues over residues 64–77 (RAEK…EEQK) and 124–139 (EMEA…KAGE). Position 197 is a phosphoserine (S197). A coiled-coil region spans residues 267-309 (LEMLREQTTDQRTKRENIKEKRKAILEARLAKLRQKKMKKSKE). Disordered regions lie at residues 299–363 (LRQK…HIRE) and 378–453 (RQSD…TVTF). Over residues 324 to 336 (PLPPEPEAVPTPR) the composition is skewed to pro residues. 2 stretches are compositionally biased toward basic and acidic residues: residues 348 to 363 (VQER…HIRE) and 378 to 389 (RQSDLRAERDPE). Positions 425–437 (PDQSHGPSPEHTS) are enriched in polar residues. Positions 439-448 (TPAPDNPPQA) are enriched in pro residues.

Widely expressed.

The protein localises to the nucleus. Functionally, probably involved in neuronal development. The sequence is that of Coiled-coil domain-containing protein 174 (CCDC174) from Homo sapiens (Human).